The chain runs to 312 residues: Olfactory receptor 6C75 (312 aa).

The Extracellular segment spans residues 1-23 (MRNSTAVTDFILLGLTSDPQWQV). N3 carries N-linked (GlcNAc...) asparagine glycosylation. A helical membrane pass occupies residues 24–44 (VLFIFLLVTYMLSVTGNLIII). Residues 45-63 (TLTLSDPHLQTPMYFFLRN) are Cytoplasmic-facing. The chain crosses the membrane as a helical span at residues 64–84 (FSFLEISFTSVCIPRFLVTVV). Over 85 to 95 (TGNRTISYNGC) the chain is Extracellular. C95 and C177 are joined by a disulfide. Residues 96 to 116 (VAQLFFFIFLGVTEFYLLAAM) traverse the membrane as a helical segment. Residues 117 to 140 (SYDRCMAICKPLHYTIIMSTRVCT) are Cytoplasmic-facing. The helical transmembrane segment at 141–161 (LLVFSSWLAGFLIIFPPVMLL) threads the bilayer. Residues 162–194 (LQLDFCASNVIDHFICDSSPMLQLSCTNTHFLE) are Extracellular-facing. A helical transmembrane segment spans residues 195–215 (LMAFFLAVVTLMVTLTLVILS). Residues 216–237 (YTNIIRTILKIPSMSQRKKAFS) are Cytoplasmic-facing. A helical membrane pass occupies residues 238–258 (TCSSHMIVVSISYSSCIFMYI). Topologically, residues 259-269 (KTSARERVTLS) are extracellular. Residues 270-290 (KGVAVLNTSVAPLLNPFIYTL) traverse the membrane as a helical segment. The Cytoplasmic portion of the chain corresponds to 291–312 (RNKQVKQAFKSMVQKMIFSLNK).

It belongs to the G-protein coupled receptor 1 family.

It is found in the cell membrane. Its function is as follows. Odorant receptor. The chain is Olfactory receptor 6C75 (OR6C75) from Homo sapiens (Human).